The following is a 148-amino-acid chain: Putative adenylate kinase (148 aa).

ATP is bound by residues glycine 9, glycine 11, lysine 12, serine 13, and threonine 14. Positions 28–44 (EGNALAVKYGCLSGDEV) are NMP. Residues 91–101 (DRGYSPEKIDE) are LID. Residue arginine 92 participates in ATP binding.

It belongs to the adenylate kinase family. AK6 subfamily. Interacts with uS11. Not a structural component of 40S pre-ribosomes, but transiently interacts with them by binding to uS11.

The catalysed reaction is AMP + ATP = 2 ADP. It carries out the reaction ATP + H2O = ADP + phosphate + H(+). In terms of biological role, broad-specificity nucleoside monophosphate (NMP) kinase that catalyzes the reversible transfer of the terminal phosphate group between nucleoside triphosphates and monophosphates. Also has ATPase activity. Involved in the late maturation steps of the 30S ribosomal particles, specifically 16S rRNA maturation. While NMP activity is not required for ribosome maturation, ATPase activity is. Associates transiently with small ribosomal subunit protein uS11. ATP hydrolysis breaks the interaction with uS11. May temporarily remove uS11 from the ribosome to enable a conformational change of the ribosomal RNA that is needed for the final maturation step of the small ribosomal subunit. The sequence is that of Putative adenylate kinase from Thermoplasma acidophilum (strain ATCC 25905 / DSM 1728 / JCM 9062 / NBRC 15155 / AMRC-C165).